A 557-amino-acid polypeptide reads, in one-letter code: Potassium-transporting ATPase potassium-binding subunit (557 aa).

Transmembrane regions (helical) follow at residues 5–25 (GFLL…PLGS), 63–83 (LSAI…MLLG), 132–152 (GLTV…FALI), 170–190 (LLRI…LFFI), 253–273 (FVQM…FGEV), 283–303 (LLWA…WAEV), 329–349 (VLVS…AVIA), 356–376 (ALGG…FGGV), 379–399 (GLYG…LMIG), 416–436 (LTAL…ALAM), 484–504 (LLAL…MAIA), and 526–546 (LFVG…FIPA).

This sequence belongs to the KdpA family. The system is composed of three essential subunits: KdpA, KdpB and KdpC.

The protein resides in the cell inner membrane. In terms of biological role, part of the high-affinity ATP-driven potassium transport (or Kdp) system, which catalyzes the hydrolysis of ATP coupled with the electrogenic transport of potassium into the cytoplasm. This subunit binds the periplasmic potassium ions and delivers the ions to the membrane domain of KdpB through an intramembrane tunnel. The chain is Potassium-transporting ATPase potassium-binding subunit from Escherichia coli O6:K15:H31 (strain 536 / UPEC).